The sequence spans 499 residues: Guanosine-5'-triphosphate,3'-diphosphate pyrophosphatase (499 aa).

It belongs to the GppA/Ppx family. GppA subfamily.

It carries out the reaction guanosine 3'-diphosphate 5'-triphosphate + H2O = guanosine 3',5'-bis(diphosphate) + phosphate + H(+). The protein operates within purine metabolism; ppGpp biosynthesis; ppGpp from GTP: step 2/2. Functionally, catalyzes the conversion of pppGpp to ppGpp. Guanosine pentaphosphate (pppGpp) is a cytoplasmic signaling molecule which together with ppGpp controls the 'stringent response', an adaptive process that allows bacteria to respond to amino acid starvation, resulting in the coordinated regulation of numerous cellular activities. This chain is Guanosine-5'-triphosphate,3'-diphosphate pyrophosphatase, found in Klebsiella pneumoniae (strain 342).